A 66-amino-acid polypeptide reads, in one-letter code: Large ribosomal subunit protein bL33c (66 aa).

This sequence belongs to the bacterial ribosomal protein bL33 family.

It is found in the plastid. The protein localises to the chloroplast. The protein is Large ribosomal subunit protein bL33c of Nandina domestica (Heavenly bamboo).